The primary structure comprises 319 residues: Acetyl-coenzyme A carboxylase carboxyl transferase subunit alpha (319 aa).

The CoA carboxyltransferase C-terminal domain occupies 36 to 293; that stretch reads EVERLKTKLE…HDAFLSELDR (258 aa).

Belongs to the AccA family. In terms of assembly, acetyl-CoA carboxylase is a heterohexamer composed of biotin carboxyl carrier protein (AccB), biotin carboxylase (AccC) and two subunits each of ACCase subunit alpha (AccA) and ACCase subunit beta (AccD).

It is found in the cytoplasm. The catalysed reaction is N(6)-carboxybiotinyl-L-lysyl-[protein] + acetyl-CoA = N(6)-biotinyl-L-lysyl-[protein] + malonyl-CoA. It functions in the pathway lipid metabolism; malonyl-CoA biosynthesis; malonyl-CoA from acetyl-CoA: step 1/1. Functionally, component of the acetyl coenzyme A carboxylase (ACC) complex. First, biotin carboxylase catalyzes the carboxylation of biotin on its carrier protein (BCCP) and then the CO(2) group is transferred by the carboxyltransferase to acetyl-CoA to form malonyl-CoA. The sequence is that of Acetyl-coenzyme A carboxylase carboxyl transferase subunit alpha from Dichelobacter nodosus (strain VCS1703A).